Here is a 749-residue protein sequence, read N- to C-terminus: Phosphate-regulating neutral endopeptidase PHEX (749 aa).

The Cytoplasmic portion of the chain corresponds to 1 to 20 (MEAETGSTMETGKGTNRGIR). A helical; Signal-anchor for type II membrane protein membrane pass occupies residues 21 to 37 (IALALFIGGTLVLGTLL). At 38 to 749 (FLVSQGLLSF…NRGADSCRLW (712 aa)) the chain is on the extracellular side. In terms of domain architecture, Peptidase M13 spans 53–749 (YCLKPECIEA…NRGADSCRLW (697 aa)). The cysteines at positions 54 and 59 are disulfide-linked. Asn71, Asn238, Asn263, Asn290, Asn301, Asn377, and Asn484 each carry an N-linked (GlcNAc...) asparagine glycan. Cystine bridges form between Cys77–Cys733, Cys85–Cys693, Cys142–Cys406, and Cys617–Cys746. His580 lines the Zn(2+) pocket. Residue Glu581 is part of the active site. 2 residues coordinate Zn(2+): His584 and Glu642. Asp646 functions as the Proton donor in the catalytic mechanism. An N-linked (GlcNAc...) asparagine glycan is attached at Asn736.

Belongs to the peptidase M13 family. Interacts with MEPE; the interaction is zinc-dependent (via ASARM motif). It depends on Zn(2+) as a cofactor. Post-translationally, N-glycosylated. In terms of tissue distribution, expressed in bone, specifically in the osteoid and in osteocytes. Expressed in teeth, specifically in odontoblasts and ameloblasts. Expressed moderately by macrophages in the liver and has minimal expression in brown adipose tissue. Also expressed in suprabasal layers of the skin.

The protein resides in the cell membrane. Peptidase that cleaves SIBLING (small integrin-binding ligand, N-linked glycoprotein)-derived ASARM peptides, thus regulating their biological activity. Cleaves ASARM peptides between Ser and Glu or Asp residues. Regulates osteogenic cell differentiation and bone mineralization through the cleavage of the MEPE-derived ASARM peptide. Promotes dentin mineralization and renal phosphate reabsorption by cleaving DMP1- and MEPE-derived ASARM peptides. Inhibits the cleavage of MEPE by CTSB/cathepsin B thus preventing MEPE degradation. The sequence is that of Phosphate-regulating neutral endopeptidase PHEX (Phex) from Mus musculus (Mouse).